We begin with the raw amino-acid sequence, 392 residues long: N-acetylneuraminate epimerase (392 aa).

Residues 1–35 (MTQLYPQYKKQLTTKIVLFSALSLLMMASLPNTYA) form the signal peptide. Kelch repeat units lie at residues 56–100 (SLYV…VVLA), 102–155 (KLYV…TTLD), 157–192 (SQAVLLGGVNKAIFDGYFTDLASAGSDEVRKSAVIN), 193–238 (AYFN…SRMD), 241–290 (LILI…LAGA), 312–361 (KQFN…QGPD), and 363–392 (VILIGGETTGGTATSAVTQLSWQGGKLHIE). Glutamate 247 (proton acceptor) is an active-site residue.

It belongs to the NanM family. Homodimer.

Its subcellular location is the periplasm. The catalysed reaction is N-acetyl-alpha-neuraminate = N-acetyl-beta-neuraminate. Its function is as follows. Converts alpha-N-acetylneuranimic acid (Neu5Ac) to the beta-anomer, accelerating the equilibrium between the alpha- and beta-anomers. Probably facilitates sialidase-negative bacteria to compete successfully for limited amounts of extracellular Neu5Ac, which is likely taken up in the beta-anomer. In addition, the rapid removal of sialic acid from solution might be advantageous to the bacterium to damp down host responses. The protein is N-acetylneuraminate epimerase of Yersinia pseudotuberculosis serotype O:1b (strain IP 31758).